The primary structure comprises 349 residues: Ribosome production factor 1 (349 aa).

Disordered stretches follow at residues 1-58 (MAKA…SEIK) and 71-105 (KQQQRKEKLAAKKKLKKEREALGDKAPPKPVPKTI). The span at 87–97 (KEREALGDKAP) shows a compositional bias: basic and acidic residues. Positions 142 to 325 (PKILITTSDR…LRSLQKGTFD (184 aa)) constitute a Brix domain. Residues 303–320 (VGIQELGPRFTLKLRSLQ) form an RNA-binding region.

Its subcellular location is the nucleus. It is found in the nucleolus. In terms of biological role, may be required for ribosome biogenesis. The sequence is that of Ribosome production factor 1 (Rpf1) from Mus musculus (Mouse).